We begin with the raw amino-acid sequence, 430 residues long: 3-phosphoshikimate 1-carboxyvinyltransferase (430 aa).

The 3-phosphoshikimate site is built by Lys-25, Ser-26, and Arg-30. Lys-25 provides a ligand contact to phosphoenolpyruvate. Gly-97 and Arg-125 together coordinate phosphoenolpyruvate. The 3-phosphoshikimate site is built by Ser-170, Gln-172, Asp-318, and Lys-345. Gln-172 serves as a coordination point for phosphoenolpyruvate. Catalysis depends on Asp-318, which acts as the Proton acceptor. Phosphoenolpyruvate contacts are provided by Arg-349 and Arg-391.

This sequence belongs to the EPSP synthase family. Monomer.

The protein localises to the cytoplasm. The enzyme catalyses 3-phosphoshikimate + phosphoenolpyruvate = 5-O-(1-carboxyvinyl)-3-phosphoshikimate + phosphate. Its pathway is metabolic intermediate biosynthesis; chorismate biosynthesis; chorismate from D-erythrose 4-phosphate and phosphoenolpyruvate: step 6/7. Catalyzes the transfer of the enolpyruvyl moiety of phosphoenolpyruvate (PEP) to the 5-hydroxyl of shikimate-3-phosphate (S3P) to produce enolpyruvyl shikimate-3-phosphate and inorganic phosphate. The sequence is that of 3-phosphoshikimate 1-carboxyvinyltransferase from Shouchella clausii (strain KSM-K16) (Alkalihalobacillus clausii).